Consider the following 634-residue polypeptide: RING finger protein 207 (634 aa).

The RING-type zinc finger occupies 25–63 (CHLCQEQYEHPCLLDCYHTFCASCLRGRVADSRLTCPVC). A B box-type; atypical zinc finger spans residues 93-145 (EETVQCANCDLECKKQDVDAMYYCNTCCQPLCRDCRETTHKAKMFSRHEIVSL). 4 residues coordinate Zn(2+): cysteine 98, cysteine 101, cysteine 127, and histidine 132. The segment at 575 to 634 (YEDSTSTADTQPSNELSCNTEDNWTLNSLSEETNPKNKDYYRTNKQKNTTDSTNRKEIPM) is disordered. Residues 577–606 (DSTSTADTQPSNELSCNTEDNWTLNSLSEE) are compositionally biased toward polar residues. Residues 607–616 (TNPKNKDYYR) are compositionally biased toward basic and acidic residues.

It localises to the cytoplasm. Functionally, plays a role in cardiac repolarization possibly by stabilizing membrane expression of the potassium channel kcnh6a/zerg, or by assisting its synthesis, folding or export from the endoplasmic reticulum, in a heat shock protein-dependent manner. This Danio rerio (Zebrafish) protein is RING finger protein 207 (rnf207b).